The chain runs to 312 residues: Deoxycytidylate deaminase (312 aa).

Residues 162 to 291 (SWDSYFMKLA…RMDEESFKVL (130 aa)) form the CMP/dCMP-type deaminase domain. A Zn(2+)-binding site is contributed by histidine 233. Glutamate 235 acts as the Proton donor in catalysis. Cysteine 260 and cysteine 263 together coordinate Zn(2+).

The protein belongs to the cytidine and deoxycytidylate deaminase family. The cofactor is Zn(2+).

It catalyses the reaction dCMP + H2O + H(+) = dUMP + NH4(+). Its activity is regulated as follows. Allosteric enzyme whose activity is greatly influenced by the end products of its metabolic pathway, dCTP and dTTP. Its function is as follows. Catalyzes the hydrolytic deamination of dCMP to yield dUMP, the nucleotide substrate for thymidylate synthetase. The sequence is that of Deoxycytidylate deaminase from Saccharomyces cerevisiae (strain ATCC 204508 / S288c) (Baker's yeast).